An 87-amino-acid chain; its full sequence is UPF0250 protein YE3006 (87 aa).

It belongs to the UPF0250 family.

The protein is UPF0250 protein YE3006 of Yersinia enterocolitica serotype O:8 / biotype 1B (strain NCTC 13174 / 8081).